Consider the following 115-residue polypeptide: Large ribosomal subunit protein bL19 (115 aa).

Belongs to the bacterial ribosomal protein bL19 family.

Its function is as follows. This protein is located at the 30S-50S ribosomal subunit interface and may play a role in the structure and function of the aminoacyl-tRNA binding site. The chain is Large ribosomal subunit protein bL19 from Baumannia cicadellinicola subsp. Homalodisca coagulata.